We begin with the raw amino-acid sequence, 54 residues long: Low temperature-induced protein lt101.2 (54 aa).

Transmembrane regions (helical) follow at residues 2–22 and 34–54; these read ASATFIEVILAIILPPVGVFL and LLLTLLGYIPGIIYAVYVLVA.

The protein belongs to the UPF0057 (PMP3) family.

The protein resides in the membrane. The protein is Low temperature-induced protein lt101.2 (LT101.2) of Hordeum vulgare (Barley).